The sequence spans 439 residues: Large ribosomal subunit protein mL44 (439 aa).

Disordered regions lie at residues 39–73 and 247–282; these read QSTA…SLPS and KAME…YGNP. The segment covering 247–257 has biased composition (basic and acidic residues); the sequence is KAMEEQDQDKT. Residues 258 to 274 show a composition bias toward acidic residues; that stretch reads PDEEEAEMVANEQDQDV.

This sequence belongs to the ribonuclease III family. Mitochondrion-specific ribosomal protein mL44 subfamily. In terms of assembly, component of the mitochondrial large ribosomal subunit (mt-LSU). Mature N.crassa 74S mitochondrial ribosomes consist of a small (37S) and a large (54S) subunit. The 37S small subunit contains a 16S ribosomal RNA (16S mt-rRNA) and 32 different proteins. The 54S large subunit contains a 23S rRNA (23S mt-rRNA) and 42 different proteins. mL44 forms a heterodimer with mL57 and stabilizes rRNA expansion segments 1/2 at a membrane-facing protuberance close to the point of attachment of the ribosome to the translocon in the membrane.

Its subcellular location is the mitochondrion. Component of the mitochondrial ribosome (mitoribosome), a dedicated translation machinery responsible for the synthesis of mitochondrial genome-encoded proteins, including at least some of the essential transmembrane subunits of the mitochondrial respiratory chain. The mitoribosomes are attached to the mitochondrial inner membrane and translation products are cotranslationally integrated into the membrane. The polypeptide is Large ribosomal subunit protein mL44 (mrpl3) (Neurospora crassa (strain ATCC 24698 / 74-OR23-1A / CBS 708.71 / DSM 1257 / FGSC 987)).